A 586-amino-acid polypeptide reads, in one-letter code: Phosphomethylpyrimidine synthase (586 aa).

The disordered stretch occupies residues 1-59 (MKQSVSAEQIELKSSLPGSKKVYVDGPREGMKVPMREIEQSDTNGVPNPPIRVYDTSGP). Over residues 22-39 (VYVDGPREGMKVPMREIE) the composition is skewed to basic and acidic residues. Residues asparagine 193, methionine 222, tyrosine 251, histidine 287, 307–309 (SRG), 348–351 (DGLR), and glutamate 387 each bind substrate. Histidine 391 provides a ligand contact to Zn(2+). A substrate-binding site is contributed by tyrosine 414. Residue histidine 455 coordinates Zn(2+). Residues cysteine 535, cysteine 538, and cysteine 543 each coordinate [4Fe-4S] cluster.

The protein belongs to the ThiC family. [4Fe-4S] cluster serves as cofactor.

It carries out the reaction 5-amino-1-(5-phospho-beta-D-ribosyl)imidazole + S-adenosyl-L-methionine = 4-amino-2-methyl-5-(phosphooxymethyl)pyrimidine + CO + 5'-deoxyadenosine + formate + L-methionine + 3 H(+). Its pathway is cofactor biosynthesis; thiamine diphosphate biosynthesis. In terms of biological role, catalyzes the synthesis of the hydroxymethylpyrimidine phosphate (HMP-P) moiety of thiamine from aminoimidazole ribotide (AIR) in a radical S-adenosyl-L-methionine (SAM)-dependent reaction. This chain is Phosphomethylpyrimidine synthase, found in Bacillus cereus (strain ATCC 10987 / NRS 248).